The chain runs to 1320 residues: Sister chromatid cohesion protein PDS5 homolog A (1320 aa).

HEAT repeat units lie at residues 156–195 (NEIF…EGDG), 272–310 (PLLL…AKDS), 388–426 (NLVN…KYCL), 709–747 (PQIR…NKEV), and 990–1028 (SLLP…CLWF). A compositionally biased stretch (polar residues) spans 1158 to 1179 (TFTSETGSNASTNSQPSSPATN). The segment at 1158 to 1320 (TFTSETGSNA…APQRQIDLQR (163 aa)) is disordered. Positions 1180–1194 (KSRDVSSEVGARENE) are enriched in basic and acidic residues. Residues 1225 to 1241 (GTENSVSSNPSAGSQPP) show a composition bias toward polar residues. A compositionally biased stretch (low complexity) spans 1255-1267 (AGAATQEKEAGAT). A compositionally biased stretch (polar residues) spans 1283–1293 (QDPSSTASTDA). Over residues 1294–1309 (LSDKTPKQQKEAEPKR) the composition is skewed to basic and acidic residues.

The protein belongs to the PDS5 family. In terms of assembly, interacts with the cohesin complex. Binds chromatin in a cohesin-dependent manner.

It is found in the nucleus. May regulate sister chromatid cohesion during mitosis and couple it to DNA replication. The protein is Sister chromatid cohesion protein PDS5 homolog A of Danio rerio (Zebrafish).